A 322-amino-acid chain; its full sequence is Probable heme-iron transport system permease protein IsdF (322 aa).

9 helical membrane-spanning segments follow: residues 9–29 (LLFL…FVTG), 61–81 (ILIA…LQAA), 89–109 (ANII…MLFI), 114–134 (FYLP…IILL), 143–163 (VSMI…LEIL), 179–199 (IWSD…LTLL), 233–253 (VFLA…GIIV), 267–287 (VLIP…DLLG), and 294–314 (LEIP…IYLI).

This sequence belongs to the binding-protein-dependent transport system permease family. FecCD subfamily.

Its subcellular location is the cell membrane. In terms of biological role, part of the binding-protein-dependent transport system for heme-iron. Responsible for the translocation of the substrate across the membrane. The sequence is that of Probable heme-iron transport system permease protein IsdF (isdF) from Staphylococcus aureus (strain MSSA476).